A 37-amino-acid chain; its full sequence is Cytochrome b6-f complex subunit 5 (37 aa).

A helical transmembrane segment spans residues 5–25 (LLSGVVLGLILVTLSGLFFAA).

The protein belongs to the PetG family. As to quaternary structure, the 4 large subunits of the cytochrome b6-f complex are cytochrome b6, subunit IV (17 kDa polypeptide, PetD), cytochrome f and the Rieske protein, while the 4 small subunits are PetG, PetL, PetM and PetN. The complex functions as a dimer.

The protein localises to the cellular thylakoid membrane. Its function is as follows. Component of the cytochrome b6-f complex, which mediates electron transfer between photosystem II (PSII) and photosystem I (PSI), cyclic electron flow around PSI, and state transitions. PetG is required for either the stability or assembly of the cytochrome b6-f complex. The chain is Cytochrome b6-f complex subunit 5 from Trichodesmium erythraeum (strain IMS101).